Here is a 423-residue protein sequence, read N- to C-terminus: Pre-mRNA polyadenylation factor fip-1 (423 aa).

The span at 1-11 shows a compositional bias: acidic residues; it reads MDIDEDEDFYA. 3 disordered regions span residues 1 to 178, 278 to 307, and 360 to 423; these read MDID…PVRT, GPGGPGVGPAGPGAMGPGGPAGAGGMGGPG, and PGGG…GRRW. Residues 19–61 show a composition bias toward low complexity; it reads PPTTAATTTTPATTTTTAAPTTTTTTTSTTTASAPPTTTSSST. Residues 65-90 show a composition bias toward acidic residues; sequence DELEEGEEEDEGGGAMDEDDDSDIDI. The span at 135 to 146 shows a compositional bias: low complexity; sequence GTNSNSNSSSNK. Residues 360–415 are compositionally biased toward gly residues; sequence PGGGPGGPGTGGMGPGGPGGQGGQGQQFGGGFGGNQGQGGYGGYDQMGGAGGGGRG.

It belongs to the FIP1 family.

The protein resides in the nucleus. Functionally, pre-mRNA polyadenylation factor that directly interacts with poly(A) polymerase. This Neurospora crassa (strain ATCC 24698 / 74-OR23-1A / CBS 708.71 / DSM 1257 / FGSC 987) protein is Pre-mRNA polyadenylation factor fip-1 (fip-1).